A 730-amino-acid chain; its full sequence is Polyphosphate kinase (730 aa).

Residues 1-21 (MMRHDRNVTEIDAETRPDENL) show a composition bias toward basic and acidic residues. Positions 1–39 (MMRHDRNVTEIDAETRPDENLWHSGDSAVGAPPAATPAA) are disordered. N86 is a binding site for ATP. Mg(2+)-binding residues include R423 and R453. H483 functions as the Phosphohistidine intermediate in the catalytic mechanism. Residues Y516, R612, and H640 each coordinate ATP.

The protein belongs to the polyphosphate kinase 1 (PPK1) family. It depends on Mg(2+) as a cofactor. Post-translationally, an intermediate of this reaction is the autophosphorylated ppk in which a phosphate is covalently linked to a histidine residue through a N-P bond.

The catalysed reaction is [phosphate](n) + ATP = [phosphate](n+1) + ADP. Catalyzes the reversible transfer of the terminal phosphate of ATP to form a long-chain polyphosphate (polyP). This chain is Polyphosphate kinase, found in Mycolicibacterium paratuberculosis (strain ATCC BAA-968 / K-10) (Mycobacterium paratuberculosis).